We begin with the raw amino-acid sequence, 506 residues long: Maturase K (506 aa).

Belongs to the intron maturase 2 family. MatK subfamily.

The protein resides in the plastid. Its subcellular location is the chloroplast. Functionally, usually encoded in the trnK tRNA gene intron. Probably assists in splicing its own and other chloroplast group II introns. This is Maturase K from Manihot esculenta (Cassava).